A 222-amino-acid chain; its full sequence is MVPYHIRQYQDSDHKRVVDVFTKGMEEYIPSTFRHMLMLPRTLLLLLGVPLALVLVSGSWILAVICIFFLLLLLRLLARQPWKEYVAKCLQTDMVDITKSYLNVHGACFWVAESGGQVVGIVAAQPVKDPPLGRKQLQLFRLSVSSQHRGQGIAKALTRTVLQFARDQSYSDVVLETSALQQGAVTLYLGMGFKKAGQYFMSIFWRLAGICTIQLKYSFPSA.

A helical membrane pass occupies residues 53–73; that stretch reads LVLVSGSWILAVICIFFLLLL. Positions 69 to 220 constitute an N-acetyltransferase domain; it reads FLLLLLRLLA…CTIQLKYSFP (152 aa).

This sequence belongs to the camello family.

The protein resides in the membrane. Its function is as follows. May play a role in regulation of gastrulation. The sequence is that of N-acetyltransferase 8F1 from Mus musculus (Mouse).